We begin with the raw amino-acid sequence, 564 residues long: Adenine deaminase (564 aa).

Belongs to the metallo-dependent hydrolases superfamily. Adenine deaminase family. Mn(2+) is required as a cofactor.

The catalysed reaction is adenine + H2O + H(+) = hypoxanthine + NH4(+). The chain is Adenine deaminase from Deinococcus geothermalis (strain DSM 11300 / CIP 105573 / AG-3a).